A 333-amino-acid polypeptide reads, in one-letter code: tRNA U34 carboxymethyltransferase (333 aa).

Carboxy-S-adenosyl-L-methionine is bound by residues lysine 97, tryptophan 111, lysine 116, glycine 136, 158-160 (DPS), 189-190 (IE), methionine 205, tyrosine 209, and arginine 324.

This sequence belongs to the class I-like SAM-binding methyltransferase superfamily. CmoB family. Homotetramer.

The catalysed reaction is carboxy-S-adenosyl-L-methionine + 5-hydroxyuridine(34) in tRNA = 5-carboxymethoxyuridine(34) in tRNA + S-adenosyl-L-homocysteine + H(+). Catalyzes carboxymethyl transfer from carboxy-S-adenosyl-L-methionine (Cx-SAM) to 5-hydroxyuridine (ho5U) to form 5-carboxymethoxyuridine (cmo5U) at position 34 in tRNAs. The chain is tRNA U34 carboxymethyltransferase from Chromohalobacter salexigens (strain ATCC BAA-138 / DSM 3043 / CIP 106854 / NCIMB 13768 / 1H11).